The primary structure comprises 102 residues: uncharacterized protein (102 aa).

2 disordered regions span residues Met1–Glu21 and Gly33–Thr71. Over Met1–Asp79 the chain is Extracellular. Residues Ser56–Thr71 show a composition bias toward polar residues. N-linked (GlcNAc...) asparagine; by host glycosylation is present at Asn65. A helical transmembrane segment spans residues Ile80–Met97. The Cytoplasmic portion of the chain corresponds to Arg98–Gln102.

This sequence belongs to the HHV-5 UL15A protein family.

It localises to the host membrane. This is an uncharacterized protein from Human cytomegalovirus (strain Merlin) (HHV-5).